The following is a 490-amino-acid chain: MVPVVALVGRPNVGKSTLFNRLTRTRDALVADFPGLTRDRKYGRAEIEGREFICIDTGGIDGTEDGVETRMAEQSLLAIEEADVVLFMVDARAGLMPADEAIAKHLRSREKPTFLVANKTDGLDPDQAVVDFYSLGLGEIYPIAASHGRGVLSLLEHVLLPWMEDLAPQEEVDEDAEYWAQFEAEENGEEEEEDDFDPQSLPIKLAIVGRPNVGKSTLTNRILGEERVVVYDMPGTTRDSIYIPMERDGREYVLIDTAGVRKRGKITDAVEKFSVIKTLQAIEDANVVMLVIDAREGISDQDLSLLGFILNSGRSLVIVVNKWDGLSQEVKEQVKETLDFRLGFIDFARVHFISALHGSGVGNLFESVREAYDSSTRRVGTSMLTRIMTMAVEDHQPPLVRGRRVKLKYAHAGGYNPPIVVIHGNQVKDLPDSYKRYLMNYFRKSLDVMGSPIRIQFKEGENPYANKRNTLTPTQMRKRKRLMKHIKKSK.

2 consecutive EngA-type G domains span residues 3–166 (PVVA…MEDL) and 203–376 (IKLA…DSST). Residues 9 to 16 (GRPNVGKS), 56 to 60 (DTGGI), 118 to 121 (NKTD), 209 to 216 (GRPNVGKS), 256 to 260 (DTAGV), and 321 to 324 (NKWD) contribute to the GTP site. The KH-like domain maps to 377-461 (RRVGTSMLTR…PIRIQFKEGE (85 aa)).

This sequence belongs to the TRAFAC class TrmE-Era-EngA-EngB-Septin-like GTPase superfamily. EngA (Der) GTPase family. As to quaternary structure, associates with the 50S ribosomal subunit.

In terms of biological role, GTPase that plays an essential role in the late steps of ribosome biogenesis. The chain is GTPase Der from Escherichia coli O17:K52:H18 (strain UMN026 / ExPEC).